The following is a 309-amino-acid chain: Tagatose-6-phosphate kinase (309 aa).

The protein belongs to the carbohydrate kinase PfkB family. LacC subfamily.

The catalysed reaction is D-tagatofuranose 6-phosphate + ATP = D-tagatofuranose 1,6-bisphosphate + ADP + H(+). The protein operates within carbohydrate metabolism; D-tagatose 6-phosphate degradation; D-glyceraldehyde 3-phosphate and glycerone phosphate from D-tagatose 6-phosphate: step 1/2. The chain is Tagatose-6-phosphate kinase from Streptococcus pyogenes serotype M4 (strain MGAS10750).